The following is a 138-amino-acid chain: MSHLTMIKTLNLRPFHSASALRKIVITSILGVAVTMSGCSLLSVYKIDLPQGTPITQTQAQKLQVGMNQNQVLYILGSPAIRDTLEPNRWDYIYDYQAGTEARRKGIADVKNASQHLKVYFDNNGIVTGIQGLESLPK.

The N-terminal stretch at 1 to 42 (MSHLTMIKTLNLRPFHSASALRKIVITSILGVAVTMSGCSLL) is a signal peptide.

The protein belongs to the BamE family. As to quaternary structure, part of the Bam complex.

The protein localises to the cell outer membrane. Its function is as follows. Part of the outer membrane protein assembly complex, which is involved in assembly and insertion of beta-barrel proteins into the outer membrane. In Psychrobacter arcticus (strain DSM 17307 / VKM B-2377 / 273-4), this protein is Outer membrane protein assembly factor BamE.